Here is a 715-residue protein sequence, read N- to C-terminus: DNA ligase (715 aa).

NAD(+) contacts are provided by residues 47–51 (DADYD), 96–97 (SL), and Glu-128. The active-site N6-AMP-lysine intermediate is Lys-130. Arg-151, Glu-188, Lys-306, and Lys-330 together coordinate NAD(+). Positions 435, 438, 453, and 459 each coordinate Zn(2+). Residues 637-715 (RRDTAVAGKT…EDEWLALIGN (79 aa)) form the BRCT domain.

This sequence belongs to the NAD-dependent DNA ligase family. LigA subfamily. Requires Mg(2+) as cofactor. It depends on Mn(2+) as a cofactor.

It catalyses the reaction NAD(+) + (deoxyribonucleotide)n-3'-hydroxyl + 5'-phospho-(deoxyribonucleotide)m = (deoxyribonucleotide)n+m + AMP + beta-nicotinamide D-nucleotide.. In terms of biological role, DNA ligase that catalyzes the formation of phosphodiester linkages between 5'-phosphoryl and 3'-hydroxyl groups in double-stranded DNA using NAD as a coenzyme and as the energy source for the reaction. It is essential for DNA replication and repair of damaged DNA. This is DNA ligase from Rhodopseudomonas palustris (strain ATCC BAA-98 / CGA009).